The following is a 96-amino-acid chain: Small ribosomal subunit protein bS6 (96 aa).

This sequence belongs to the bacterial ribosomal protein bS6 family.

In terms of biological role, binds together with bS18 to 16S ribosomal RNA. This chain is Small ribosomal subunit protein bS6, found in Bacillus cereus (strain G9842).